We begin with the raw amino-acid sequence, 952 residues long: Lysosomal alpha-glucosidase (952 aa).

The signal sequence occupies residues 1–27 (MRVRHPPCSRRLLAICALVSLATAALL). Residues 28-69 (GHILLHDFLLVPRELSGSSPVLEETHPAHQQGASRPGPRDAQ) constitute a propeptide that is removed on maturation. The interval 47-80 (PVLEETHPAHQQGASRPGPRDAQAHLGRPRAVPT) is disordered. Residues 80 to 131 (TQCDVPPNSRFDCAPDKAITREQCDARGCCYIPAKQGLRGAQMGQPWCFFPP) form the P-type domain. 3 cysteine pairs are disulfide-bonded: cysteine 82–cysteine 109, cysteine 92–cysteine 108, and cysteine 103–cysteine 127. N-linked (GlcNAc...) asparagine glycans are attached at residues asparagine 140, asparagine 233, and asparagine 390. Position 404 (aspartate 404) interacts with substrate. Asparagine 470 is a glycosylation site (N-linked (GlcNAc...) asparagine). The active-site Nucleophile is the aspartate 518. The active site involves glutamate 521. A disulfide bond links cysteine 533 and cysteine 558. Positions 600 and 616 each coordinate substrate. An intrachain disulfide couples cysteine 647 to cysteine 658. An N-linked (GlcNAc...) asparagine glycan is attached at asparagine 652. Residue histidine 674 coordinates substrate. N-linked (GlcNAc...) asparagine glycosylation is found at asparagine 882 and asparagine 925.

Belongs to the glycosyl hydrolase 31 family.

It is found in the lysosome. It localises to the lysosome membrane. It catalyses the reaction Hydrolysis of terminal, non-reducing (1-&gt;4)-linked alpha-D-glucose residues with release of alpha-D-glucose.. Functionally, essential for the degradation of glycogen in lysosomes. Has highest activity on alpha-1,4-linked glycosidic linkages, but can also hydrolyze alpha-1,6-linked glucans. The sequence is that of Lysosomal alpha-glucosidase (GAA) from Pongo abelii (Sumatran orangutan).